Here is a 480-residue protein sequence, read N- to C-terminus: Ribosomal protein uS12 methylthiotransferase RimO (480 aa).

One can recognise an MTTase N-terminal domain in the interval 37-147 (NRIGFVSLGC…VLKHVHKYVP (111 aa)). The [4Fe-4S] cluster site is built by cysteine 46, cysteine 82, cysteine 111, cysteine 179, cysteine 183, and cysteine 186. The region spanning 165–402 (LTPKHYAYLK…MEVQAEISAE (238 aa)) is the Radical SAM core domain. Positions 405–471 (ARFVGRTMDI…EHDLWAELVD (67 aa)) constitute a TRAM domain.

Belongs to the methylthiotransferase family. RimO subfamily. [4Fe-4S] cluster serves as cofactor.

It is found in the cytoplasm. The enzyme catalyses L-aspartate(89)-[ribosomal protein uS12]-hydrogen + (sulfur carrier)-SH + AH2 + 2 S-adenosyl-L-methionine = 3-methylsulfanyl-L-aspartate(89)-[ribosomal protein uS12]-hydrogen + (sulfur carrier)-H + 5'-deoxyadenosine + L-methionine + A + S-adenosyl-L-homocysteine + 2 H(+). In terms of biological role, catalyzes the methylthiolation of an aspartic acid residue of ribosomal protein uS12. This chain is Ribosomal protein uS12 methylthiotransferase RimO, found in Shewanella sp. (strain ANA-3).